The primary structure comprises 320 residues: Putative cyclin-D7-1 (320 aa).

Residues 1–46 are disordered; it reads MDDDDDTSFNNSLDLYCDEDPFDSTPPPPPPPPEQQQQAGTTTPDD. A compositionally biased stretch (pro residues) spans 24 to 34; sequence STPPPPPPPPE. Residues 35 to 44 are compositionally biased toward low complexity; it reads QQQQAGTTTP.

The protein belongs to the cyclin family. Cyclin D subfamily.

This is Putative cyclin-D7-1 (CYCD7-1) from Oryza sativa subsp. japonica (Rice).